The chain runs to 371 residues: Probable inactive methyltransferase Os04g0175900 (371 aa).

A substrate-binding site is contributed by 137–143 (LDVDEDN). The segment at 170–188 (LFEYMGTNHRFNMLFNQAM) is substrate binding. Positions 216, 239, 260, and 273 each coordinate S-adenosyl-L-methionine.

It belongs to the class I-like SAM-binding methyltransferase superfamily. Cation-independent O-methyltransferase family. COMT subfamily.

This chain is Probable inactive methyltransferase Os04g0175900, found in Oryza sativa subsp. japonica (Rice).